A 454-amino-acid chain; its full sequence is tRNA modification GTPase MnmE (454 aa).

Positions 23, 80, and 120 each coordinate (6S)-5-formyl-5,6,7,8-tetrahydrofolate. The 162-residue stretch at 216 to 377 (GMKVVIAGRP…LRNHLKQSMG (162 aa)) folds into the TrmE-type G domain. Asparagine 226 serves as a coordination point for K(+). GTP is bound by residues 226–231 (NAGKSS), 245–251 (TDIAGTT), 270–273 (DTAG), 335–338 (NKAD), and 358–360 (SAR). Serine 230 lines the Mg(2+) pocket. Residues threonine 245, isoleucine 247, and threonine 250 each coordinate K(+). Residue threonine 251 coordinates Mg(2+). Lysine 454 lines the (6S)-5-formyl-5,6,7,8-tetrahydrofolate pocket.

Belongs to the TRAFAC class TrmE-Era-EngA-EngB-Septin-like GTPase superfamily. TrmE GTPase family. In terms of assembly, homodimer. Heterotetramer of two MnmE and two MnmG subunits. K(+) serves as cofactor.

Its subcellular location is the cytoplasm. In terms of biological role, exhibits a very high intrinsic GTPase hydrolysis rate. Involved in the addition of a carboxymethylaminomethyl (cmnm) group at the wobble position (U34) of certain tRNAs, forming tRNA-cmnm(5)s(2)U34. In Salmonella typhimurium (strain LT2 / SGSC1412 / ATCC 700720), this protein is tRNA modification GTPase MnmE.